The following is a 295-amino-acid chain: 4-diphosphocytidyl-2-C-methyl-D-erythritol kinase (295 aa).

K10 is a catalytic residue. 97–107 (PIGSGLGGASS) serves as a coordination point for ATP. D139 is a catalytic residue.

This sequence belongs to the GHMP kinase family. IspE subfamily. As to quaternary structure, homodimer.

It catalyses the reaction 4-CDP-2-C-methyl-D-erythritol + ATP = 4-CDP-2-C-methyl-D-erythritol 2-phosphate + ADP + H(+). It functions in the pathway isoprenoid biosynthesis; isopentenyl diphosphate biosynthesis via DXP pathway; isopentenyl diphosphate from 1-deoxy-D-xylulose 5-phosphate: step 3/6. Catalyzes the phosphorylation of the position 2 hydroxy group of 4-diphosphocytidyl-2C-methyl-D-erythritol. The sequence is that of 4-diphosphocytidyl-2-C-methyl-D-erythritol kinase from Blochmanniella pennsylvanica (strain BPEN).